The primary structure comprises 344 residues: uncharacterized protein (344 aa).

This sequence belongs to the glycosyltransferase 2 family.

In terms of biological role, may be involved in the production of the exopolysaccharide (EPS) component of the extracellular matrix during biofilm formation. EPS is responsible for the adhesion of chains of cells into bundles. This is an uncharacterized protein from Bacillus subtilis (strain 168).